Here is a 459-residue protein sequence, read N- to C-terminus: Replication initiator protein (459 aa).

Functionally, essential for pSAM2 replication. The polypeptide is Replication initiator protein (repSA) (Streptomyces ambofaciens).